A 1101-amino-acid chain; its full sequence is Zinc finger SWIM domain-containing protein 4 (1101 aa).

Residues 1–29 form a disordered region; it reads MEPPAAKRSRGCPAGDEPGTGARRSRPEP. The SWIM-type zinc-finger motif lies at 134–171; sequence YHVSISFDRCKITSVSCGCDNRDLFYCAHVVALSLYRI.

This Mus musculus (Mouse) protein is Zinc finger SWIM domain-containing protein 4 (Zswim4).